A 249-amino-acid chain; its full sequence is Short-chain dehydrogenase virB (249 aa).

The NADP(+) site is built by I16, R104, Y150, K154, V183, and T185. The active-site Proton donor is Y150. The active-site Lowers pKa of active site Tyr is K154.

The protein belongs to the short-chain dehydrogenases/reductases (SDR) family.

The protein operates within secondary metabolite biosynthesis. Short-chain dehydrogenase; part of the gene cluster that mediates the biosynthesis of virensols and trichoxide, fungal natural products that contain or are derived from a salicylaldehyde core. The pathway begins with the synthesis of the reduced chain in virensol C by the highly reducing polyketide synthase virA via condensation of one acetate and 8 malonate units. VirA has interesting programming rules since the first 2 ketides are fully reduced, the 3 following ketides undergo beta-dehydration, and the last 3 ketides are only reduced to beta-hydroxys to yield the trihydroxy portion. The production of aldehyde virensol C by virA alone is surprising, since virA does not contain a reductase (R) domain that is typically associated with reductive product release in HRPKS. The cupin-domain enzyme virC is involved in enhancing virA product turnover. The short-chain dehydrogenase virB then oxidizes the C-7 alcohol of virensol C to a ketone, yielding virensol D. Virensol D is further transformed to salicylaldehyde 5-deoxyaurocitrin by the short-chain dehydrogenase virD. VirD catalyzes the dehydrogenation of C-3 to form the beta-ketone aldehyde, which is followed by the generation of the nucleophilic C-2 that is required for the intramolecular aldol condensation between C-2 and C-7, itself followed by dehydration and aromatization which leads to salicylaldehyde 5-deoxyaurocitrin. While the dehydrogenation of virensol D is definitely catalyzed by virD, the aldol condensation and dehydration may be uncatalyzed or assisted by virD. The short chain dehydrogenase virG then converts salicylaldehyde 5-deoxyaurocitrin into virensol B which is further hydroxylated by the cytochrome P450 monooxygenase virE to yield the hydroquinone virensol A. VirI then may oxidize virensol A to form the quinone, while virH performs the epoxidation. Finally, the two remaining short-chain dehydrogenases, virK and virL, are probably responsible for reducing the ketones to the corresponding alcohols to furnish the epoxycyclohexanol structure in trichoxide. The sequence is that of Short-chain dehydrogenase virB from Hypocrea virens (strain Gv29-8 / FGSC 10586) (Gliocladium virens).